The primary structure comprises 149 residues: Large ribosomal subunit protein uL13 (149 aa).

Belongs to the universal ribosomal protein uL13 family. As to quaternary structure, part of the 50S ribosomal subunit.

Functionally, this protein is one of the early assembly proteins of the 50S ribosomal subunit, although it is not seen to bind rRNA by itself. It is important during the early stages of 50S assembly. This Gemmatimonas aurantiaca (strain DSM 14586 / JCM 11422 / NBRC 100505 / T-27) protein is Large ribosomal subunit protein uL13.